Here is a 253-residue protein sequence, read N- to C-terminus: Indole-3-glycerol phosphate synthase (253 aa).

The protein belongs to the TrpC family.

The catalysed reaction is 1-(2-carboxyphenylamino)-1-deoxy-D-ribulose 5-phosphate + H(+) = (1S,2R)-1-C-(indol-3-yl)glycerol 3-phosphate + CO2 + H2O. It participates in amino-acid biosynthesis; L-tryptophan biosynthesis; L-tryptophan from chorismate: step 4/5. This Bacillus cereus (strain ZK / E33L) protein is Indole-3-glycerol phosphate synthase.